The chain runs to 151 residues: Small ribosomal subunit protein uS15 (151 aa).

It belongs to the universal ribosomal protein uS15 family. As to quaternary structure, component of the small ribosomal subunit. Part of the small subunit (SSU) processome, composed of more than 70 proteins and the RNA chaperone small nucleolar RNA (snoRNA) U3.

It is found in the cytoplasm. The protein localises to the nucleus. It localises to the nucleolus. Its function is as follows. Component of the small ribosomal subunit. The ribosome is a large ribonucleoprotein complex responsible for the synthesis of proteins in the cell. Part of the small subunit (SSU) processome, first precursor of the small eukaryotic ribosomal subunit. During the assembly of the SSU processome in the nucleolus, many ribosome biogenesis factors, an RNA chaperone and ribosomal proteins associate with the nascent pre-rRNA and work in concert to generate RNA folding, modifications, rearrangements and cleavage as well as targeted degradation of pre-ribosomal RNA by the RNA exosome. The sequence is that of Small ribosomal subunit protein uS15 (rps-13) from Caenorhabditis elegans.